The following is a 213-amino-acid chain: Uridine kinase (213 aa).

15-22 (GASASGKS) provides a ligand contact to ATP.

This sequence belongs to the uridine kinase family.

Its subcellular location is the cytoplasm. It carries out the reaction uridine + ATP = UMP + ADP + H(+). The catalysed reaction is cytidine + ATP = CMP + ADP + H(+). It functions in the pathway pyrimidine metabolism; CTP biosynthesis via salvage pathway; CTP from cytidine: step 1/3. The protein operates within pyrimidine metabolism; UMP biosynthesis via salvage pathway; UMP from uridine: step 1/1. The sequence is that of Uridine kinase from Yersinia enterocolitica serotype O:8 / biotype 1B (strain NCTC 13174 / 8081).